The primary structure comprises 854 residues: DNA mismatch repair protein MutS (854 aa).

614–621 (GPNMGGKS) lines the ATP pocket.

The protein belongs to the DNA mismatch repair MutS family.

Functionally, this protein is involved in the repair of mismatches in DNA. It is possible that it carries out the mismatch recognition step. This protein has a weak ATPase activity. This Sodalis glossinidius (strain morsitans) protein is DNA mismatch repair protein MutS.